The primary structure comprises 510 residues: Bifunctional pantoate ligase/cytidylate kinase (510 aa).

A pantoate--beta-alanine ligase region spans residues 1-276 (MNKIIIRKTE…CGKTRLIDHV (276 aa)). Position 29–36 (29–36 (MGNLHDGH)) interacts with ATP. The active-site Proton donor is the His36. Gln61 is a (R)-pantoate binding site. Residue Gln61 participates in beta-alanine binding. 150-153 (GEKD) provides a ligand contact to ATP. (R)-pantoate is bound at residue Gln156. Position 187 to 190 (187 to 190 (FSSR)) interacts with ATP. The cytidylate kinase stretch occupies residues 277–510 (FLMKRKPIIA…LNIPKEIQLE (234 aa)).

The protein in the N-terminal section; belongs to the pantothenate synthetase family. It in the C-terminal section; belongs to the cytidylate kinase family. Type 1 subfamily.

It localises to the cytoplasm. It catalyses the reaction (R)-pantoate + beta-alanine + ATP = (R)-pantothenate + AMP + diphosphate + H(+). The catalysed reaction is CMP + ATP = CDP + ADP. The enzyme catalyses dCMP + ATP = dCDP + ADP. Its pathway is cofactor biosynthesis; (R)-pantothenate biosynthesis; (R)-pantothenate from (R)-pantoate and beta-alanine: step 1/1. In terms of biological role, catalyzes the condensation of pantoate with beta-alanine in an ATP-dependent reaction via a pantoyl-adenylate intermediate. Its function is as follows. Catalyzes the transfer of a phosphate group from ATP to either CMP or dCMP to form CDP or dCDP and ADP, respectively. This chain is Bifunctional pantoate ligase/cytidylate kinase, found in Prochlorococcus marinus subsp. pastoris (strain CCMP1986 / NIES-2087 / MED4).